The following is a 663-amino-acid chain: Putative glucosamine-6-phosphate deaminase-like protein BT_0258 (663 aa).

Residues 1-290 (MKTNLSSQIT…NLTRIQRPWL (290 aa)) form a glucosamine-6-phosphate deaminase-like region. Glutamate 184 is a catalytic residue.

It in the N-terminal section; belongs to the glucosamine/galactosamine-6-phosphate isomerase family. NagB subfamily.

The polypeptide is Putative glucosamine-6-phosphate deaminase-like protein BT_0258 (Bacteroides thetaiotaomicron (strain ATCC 29148 / DSM 2079 / JCM 5827 / CCUG 10774 / NCTC 10582 / VPI-5482 / E50)).